A 675-amino-acid chain; its full sequence is Heat shock 70 kDa protein 12A (675 aa).

Residues 1–45 (MADKEAGGGDAGPRETAPTSTYSSPARSLGDTGITPLSPSHILND) are disordered. Position 2 is an N-acetylalanine (Ala2). The span at 17–26 (APTSTYSSPA) shows a compositional bias: polar residues.

It belongs to the heat shock protein 70 family. As to quaternary structure, interacts with SORL1 (via cytosolic C-terminus); this interaction affects SORL1 internalization and subcellular localization. As to expression, expressed most strongly in brain, kidney and heart with little or no expression in other tissues. In the brain, expressed in glial cells, including astrocytes (at protein level). In the aorta, preferentially expressed in lesions.

Its subcellular location is the cytoplasm. It is found in the nucleus. In terms of biological role, adapter protein for SORL1, but not SORT1. Delays SORL1 internalization and affects SORL1 subcellular localization. The sequence is that of Heat shock 70 kDa protein 12A (Hspa12a) from Mus musculus (Mouse).